A 199-amino-acid chain; its full sequence is GTP cyclohydrolase-2 (199 aa).

Residue 52–56 (RMHSE) coordinates GTP. Zn(2+) contacts are provided by Cys-57, Cys-68, and Cys-70. GTP is bound by residues Gln-73, 94-96 (EGR), and Thr-116. Asp-128 functions as the Proton acceptor in the catalytic mechanism. Catalysis depends on Arg-130, which acts as the Nucleophile. Positions 151 and 156 each coordinate GTP.

The protein belongs to the GTP cyclohydrolase II family. Zn(2+) is required as a cofactor.

The catalysed reaction is GTP + 4 H2O = 2,5-diamino-6-hydroxy-4-(5-phosphoribosylamino)-pyrimidine + formate + 2 phosphate + 3 H(+). The protein operates within cofactor biosynthesis; riboflavin biosynthesis; 5-amino-6-(D-ribitylamino)uracil from GTP: step 1/4. In terms of biological role, catalyzes the conversion of GTP to 2,5-diamino-6-ribosylamino-4(3H)-pyrimidinone 5'-phosphate (DARP), formate and pyrophosphate. This chain is GTP cyclohydrolase-2, found in Aliivibrio salmonicida (strain LFI1238) (Vibrio salmonicida (strain LFI1238)).